Here is a 20-residue protein sequence, read N- to C-terminus: Transcriptional regulatory protein PufK (20 aa).

The segment covering 1-11 (MVPYRNPRHQH) has biased composition (basic residues). The interval 1–20 (MVPYRNPRHQHVASVLRSGG) is disordered.

Involved in the transcriptional regulation of pufB. The protein is Transcriptional regulatory protein PufK (pufK) of Cereibacter sphaeroides (strain ATCC 17023 / DSM 158 / JCM 6121 / CCUG 31486 / LMG 2827 / NBRC 12203 / NCIMB 8253 / ATH 2.4.1.) (Rhodobacter sphaeroides).